Consider the following 140-residue polypeptide: Hemoglobin subunit alpha (140 aa).

The region spanning 1 to 140 is the Globin domain; it reads LSAADKGHVK…VSTVLTSKYR (140 aa). Serine 2 is modified (phosphoserine). N6-succinyllysine occurs at positions 6 and 10. Residue lysine 15 is modified to N6-acetyllysine; alternate. N6-succinyllysine; alternate is present on lysine 15. Tyrosine 23 bears the Phosphotyrosine mark. A Phosphoserine modification is found at serine 34. At lysine 39 the chain carries N6-succinyllysine. Serine 48 is subject to Phosphoserine. Histidine 57 contacts O2. Histidine 86 is a binding site for heme b. The residue at position 101 (serine 101) is a Phosphoserine. Threonine 107 carries the post-translational modification Phosphothreonine. Phosphoserine is present on serine 123. Phosphothreonine is present on residues threonine 133 and threonine 136. The residue at position 137 (serine 137) is a Phosphoserine.

The protein belongs to the globin family. Heterotetramer of two alpha chains and two beta chains. In terms of tissue distribution, red blood cells.

Its function is as follows. Involved in oxygen transport from the lung to the various peripheral tissues. In terms of biological role, hemopressin acts as an antagonist peptide of the cannabinoid receptor CNR1. Hemopressin-binding efficiently blocks cannabinoid receptor CNR1 and subsequent signaling. This is Hemoglobin subunit alpha (HBA) from Tragelaphus strepsiceros (Greater kudu).